The sequence spans 320 residues: Cytochrome f (320 aa).

The N-terminal stretch at 1–35 (MQTINTFSWINQRITRSISVLLLVYIITRTSISSA) is a signal peptide. The heme site is built by tyrosine 36, cysteine 56, cysteine 59, and histidine 60. A helical transmembrane segment spans residues 286–306 (VQGLLFFLASVILAQIFLVLK).

The protein belongs to the cytochrome f family. As to quaternary structure, the 4 large subunits of the cytochrome b6-f complex are cytochrome b6, subunit IV (17 kDa polypeptide, petD), cytochrome f and the Rieske protein, while the 4 small subunits are PetG, PetL, PetM and PetN. The complex functions as a dimer. Heme is required as a cofactor.

Its subcellular location is the plastid thylakoid membrane. Component of the cytochrome b6-f complex, which mediates electron transfer between photosystem II (PSII) and photosystem I (PSI), cyclic electron flow around PSI, and state transitions. The chain is Cytochrome f from Cuscuta exaltata (Tall dodder).